The sequence spans 128 residues: Ribosome-binding factor A (128 aa).

The protein belongs to the RbfA family. As to quaternary structure, monomer. Binds 30S ribosomal subunits, but not 50S ribosomal subunits or 70S ribosomes.

Its subcellular location is the cytoplasm. Functionally, one of several proteins that assist in the late maturation steps of the functional core of the 30S ribosomal subunit. Associates with free 30S ribosomal subunits (but not with 30S subunits that are part of 70S ribosomes or polysomes). Required for efficient processing of 16S rRNA. May interact with the 5'-terminal helix region of 16S rRNA. The sequence is that of Ribosome-binding factor A from Saccharophagus degradans (strain 2-40 / ATCC 43961 / DSM 17024).